A 117-amino-acid chain; its full sequence is Large ribosomal subunit protein bL19 (117 aa).

Belongs to the bacterial ribosomal protein bL19 family.

Its function is as follows. This protein is located at the 30S-50S ribosomal subunit interface and may play a role in the structure and function of the aminoacyl-tRNA binding site. This is Large ribosomal subunit protein bL19 from Vesicomyosocius okutanii subsp. Calyptogena okutanii (strain HA).